Reading from the N-terminus, the 242-residue chain is Segregation and condensation protein A (242 aa).

The protein belongs to the ScpA family. Component of a cohesin-like complex composed of ScpA, ScpB and the Smc homodimer, in which ScpA and ScpB bind to the head domain of Smc. The presence of the three proteins is required for the association of the complex with DNA.

It is found in the cytoplasm. Its function is as follows. Participates in chromosomal partition during cell division. May act via the formation of a condensin-like complex containing Smc and ScpB that pull DNA away from mid-cell into both cell halves. This is Segregation and condensation protein A from Streptococcus pneumoniae serotype 2 (strain D39 / NCTC 7466).